The sequence spans 431 residues: Histidine--tRNA ligase (431 aa).

This sequence belongs to the class-II aminoacyl-tRNA synthetase family. In terms of assembly, homodimer.

Its subcellular location is the cytoplasm. The catalysed reaction is tRNA(His) + L-histidine + ATP = L-histidyl-tRNA(His) + AMP + diphosphate + H(+). This is Histidine--tRNA ligase from Neisseria gonorrhoeae (strain ATCC 700825 / FA 1090).